The primary structure comprises 87 residues: Large ribosomal subunit protein eL31 (87 aa).

This sequence belongs to the eukaryotic ribosomal protein eL31 family.

The protein is Large ribosomal subunit protein eL31 (rpl31e) of Methanocaldococcus jannaschii (strain ATCC 43067 / DSM 2661 / JAL-1 / JCM 10045 / NBRC 100440) (Methanococcus jannaschii).